We begin with the raw amino-acid sequence, 345 residues long: Delta(6)-protoilludene synthase (345 aa).

The Mg(2+) site is built by aspartate 84, asparagine 220, serine 224, and glutamate 228. A DDXXD motif motif is present at residues 84–88 (DEYSD). The (2E,6E)-farnesyl diphosphate site is built by arginine 309 and tyrosine 310.

This sequence belongs to the terpene synthase family. In terms of assembly, monomer. The cofactor is Mg(2+).

The catalysed reaction is (2E,6E)-farnesyl diphosphate = Delta(6)-protoilludene + diphosphate. Its pathway is secondary metabolite biosynthesis. Its function is as follows. Delta(6)-protoilludene synthase, part of the gene cluster that mediates the biosynthesis of melleolides, a range of antifungal and phytotoxic polyketide derivatives composed of an orsellinic acid (OA) moiety esterified to various sesquiterpene alcohols. The first step in melleolides biosynthesis is performed by the delta(6)-protoilludene synthase PRO1 which catalyzes the cyclization of farnesyl diphosphate to protoilludene. The orsellinic acid synthase armB produces OA by condensing acetyl-CoA with 3 malonyl-CoA units in a three-round chain elongation reaction folowed by a C2-C7 ring closure. ArmB further catalyzes the trans-esterification of OA to the various sesquiterpene alcohols resulting from the hydroxylation of protoilludene. The melleolides cluster also includes 5 cytochrome P450 monooxygenases, 4 NAD(+)-dependent oxidoreductases, one flavin-dependent oxidoreductase, and one O-methyltransferase. The cytochrome P450 monooxygenases may be involved in protoilludene hydroxylation to elaborate melleolides with multiple alcohol groups, such as melleolide D, which carries alcohol functionalities at C-4, C-5, C-10, and C-13. The role of the NAD(+)-dependent enzymes remains unknown. Numerous melleolides, including arnamial, show 5'-O-methylation of the aromatic moiety which may be catalyzed by the methyltransferase encoded in the cluster. The flavin-dependent oxidoreductase might represent the dehydrogenase yielding the aldehyde in position 1 of arnamial and other melleolides. Finally, several halogenases, localized outside of the cluster, are able to catalyze the transfer of a single chlorine atom to the melleolide backbone, resulting in a 6'-chloromelleolide product. In Armillaria gallica (Bulbous honey fungus), this protein is Delta(6)-protoilludene synthase.